The chain runs to 455 residues: Lysine histidine transporter-like 4 (455 aa).

At 1 to 38 the chain is on the cytoplasmic side; sequence MAGIPDHIQDQHLVEEDQPFDLEDWLPITASRNANWYY. Residues 39–59 form a helical membrane-spanning segment; sequence SAFHNVTAIVGAGVLGLPYAM. Residues 60 to 61 lie on the Extracellular side of the membrane; the sequence is SE. Residues 62-82 form a helical membrane-spanning segment; sequence LGWGPGVVVLILSWVITLYTL. Over 83–113 the chain is Cytoplasmic; that stretch reads WQMIEMHEMFEGQRFDRYHELGQAAFGKKLG. Residues 114 to 134 form a helical membrane-spanning segment; that stretch reads LYIIVPLQLLVEISVCIVYMV. Residues 135–158 are Extracellular-facing; that stretch reads TGGKSLKNVHDLALGDGDKCTKLR. A helical transmembrane segment spans residues 159–179; the sequence is IQHFILIFASSQFVLSLLKNF. Topologically, residues 180–181 are cytoplasmic; sequence NS. The chain crosses the membrane as a helical span at residues 182-202; the sequence is ISGVSLVAAVMSVSYSTIAWV. At 203–226 the chain is on the extracellular side; that stretch reads ASLRKGATTGSVEYGYRKRTTSVP. The chain crosses the membrane as a helical span at residues 227 to 247; it reads LAFLSALGEMAFAYAGHNVVL. Topologically, residues 248–267 are cytoplasmic; sequence EIQATIPSTPENPSKRPMWK. Residues 268–288 form a helical membrane-spanning segment; it reads GAVVAYIIVAFCYFPVALVGF. Residues 289–307 are Extracellular-facing; the sequence is KTFGNSVEESILESLTKPT. The helical transmembrane segment at 308-328 threads the bilayer; the sequence is ALVIVANMFVVIHLLGSYQVY. The Cytoplasmic segment spans residues 329–357; sequence AMPVFDMIESVMIRIWHFSPTRVLRFTIR. A helical membrane pass occupies residues 358 to 378; that stretch reads WTFVAATMGIAVGLPYYSALL. Residue Ser-379 is a topological domain, extracellular. The helical transmembrane segment at 380–400 threads the bilayer; sequence FFGGFVFAPTTYFIPCIMWLI. Residues 401–412 lie on the Cytoplasmic side of the membrane; that stretch reads LKKPKRFSLSWC. Residues 413–433 form a helical membrane-spanning segment; that stretch reads MNWFCIIFGLVLMIIAPIGGL. The Extracellular portion of the chain corresponds to 434–455; sequence AKLIYNIQKGTLPNSRCNLPKH.

This sequence belongs to the amino acid/polyamine transporter 2 family. Amino acid/auxin permease (AAAP) (TC 2.A.18.2) subfamily.

The protein resides in the cell membrane. Amino acid transporter. The sequence is that of Lysine histidine transporter-like 4 from Arabidopsis thaliana (Mouse-ear cress).